The following is a 784-amino-acid chain: Protein-tyrosine-phosphatase MKP1 (784 aa).

Disordered regions lie at residues 1–73 and 94–118; these read MVGR…NSKA and PKAG…TGER. Low complexity predominate over residues 22 to 34; sequence WRSASWSASRTAS. Thr-64 and Thr-109 each carry phosphothreonine. The Tyrosine-protein phosphatase domain occupies 149-291; the sequence is ECSKVADHIY…LLQCQKRVHA (143 aa). The Phosphocysteine intermediate role is filled by Cys-235. Residue 235 to 241 coordinates substrate; that stretch reads CCQGVSR. Residues 488 to 586 form a disordered region; the sequence is HSSGSPSSTT…ASPSLAERRG (99 aa). 2 stretches are compositionally biased toward low complexity: residues 489–510 and 521–553; these read SSGS…FLSP and SLKS…LSLL. The segment covering 554–577 has biased composition (polar residues); sequence PSQTSPKESRGVNTFLQPSPNRKA. 2 positions are modified to phosphoserine: Ser-558 and Ser-572.

In terms of assembly, interacts with MPK6. May interact with MPK3 and MPK4. Post-translationally, phosphorylated on threonine and serine residues by MPK6.

The protein resides in the cytoplasm. It is found in the cytosol. The enzyme catalyses O-phospho-L-tyrosyl-[protein] + H2O = L-tyrosyl-[protein] + phosphate. In terms of biological role, protein-tyrosine-phosphatase that acts as a negative regulator of MPK6 and MPK3 signaling by dephosphorylating and repressing MPK6 and MPK3. Modulates defense response by repressing salicylic acid (SA) production, camalexin biosynthesis and SNC1-mediated responses. Acts as a negative regulator of MPK6-mediated pathogen-associated molecular pattern (PAMP) responses, including MPK6 and MPK3 activation, accumulation of extracellular reactive oxygen species and inhibition of seedling growth. Involved in UV-B stress tolerance. May be involved in salt and genotoxic stress responses. This chain is Protein-tyrosine-phosphatase MKP1 (MKP1), found in Arabidopsis thaliana (Mouse-ear cress).